Here is a 221-residue protein sequence, read N- to C-terminus: Lipoprotein-releasing system ATP-binding protein LolD (221 aa).

The region spanning 6–220 (LILKKISKHY…YNLKNGLLNI (215 aa)) is the ABC transporter domain. 42–49 (GSSGSGKS) provides a ligand contact to ATP.

The protein belongs to the ABC transporter superfamily. Lipoprotein translocase (TC 3.A.1.125) family. As to quaternary structure, the complex is composed of two ATP-binding proteins (LolD) and two transmembrane proteins (LolC and LolE).

Its subcellular location is the cell inner membrane. Its function is as follows. Part of the ABC transporter complex LolCDE involved in the translocation of mature outer membrane-directed lipoproteins, from the inner membrane to the periplasmic chaperone, LolA. Responsible for the formation of the LolA-lipoprotein complex in an ATP-dependent manner. The polypeptide is Lipoprotein-releasing system ATP-binding protein LolD (Rickettsia typhi (strain ATCC VR-144 / Wilmington)).